Reading from the N-terminus, the 243-residue chain is Peptidase E (243 aa).

Residues Ser118, Asp133, and His155 each act as charge relay system in the active site.

This sequence belongs to the peptidase S51 family.

The protein resides in the cytoplasm. The enzyme catalyses Dipeptidase E catalyzes the hydrolysis of dipeptides Asp-|-Xaa. It does not act on peptides with N-terminal Glu, Asn or Gln, nor does it cleave isoaspartyl peptides.. Functionally, hydrolyzes dipeptides containing N-terminal aspartate residues. May play a role in allowing the cell to use peptide aspartate to spare carbon otherwise required for the synthesis of the aspartate family of amino acids. The chain is Peptidase E from Streptomyces coelicolor (strain ATCC BAA-471 / A3(2) / M145).